The chain runs to 159 residues: Odorant-binding protein (159 aa).

It belongs to the calycin superfamily. Lipocalin family. As to quaternary structure, homodimer.

It is found in the secreted. Functionally, this protein binds a wide variety of chemical odorants. In Bos taurus (Bovine), this protein is Odorant-binding protein.